Reading from the N-terminus, the 275-residue chain is Peflin (275 aa).

8 tandem repeats follow at residues 21-29 (PPGGYYPGP), 31-39 (HGGGQYGSG), 41-49 (PPGGGYGAP), 50-59 (APGGPYGYPS), 60-68 (AGGVPSGTP), 76-84 (PPGGPYGQL), 85-91 (PPGGPYG), and 92-100 (TQPGHYGQG). Disordered stretches follow at residues 21 to 45 (PPGGYYPGPPHGGGQYGSGLPPGGG) and 59 to 103 (SAGG…GGVP). The 8 X 9 AA approximate tandem repeat of [AP]-P-G-G-P-Y-G-G-P-P stretch occupies residues 21 to 100 (PPGGYYPGPP…GTQPGHYGQG (80 aa)). A compositionally biased stretch (gly residues) spans 31–45 (HGGGQYGSGLPPGGG). Positions 59 to 70 (SAGGVPSGTPSG) are enriched in low complexity. EF-hand domains are found at residues 105 to 140 (NVDPEAYSWFQSVDADHSGYISLKELKQALVNSNWS), 146 to 174 (TCLMMINMFDKTKSGRIDVAGFSALWKFL), 172 to 207 (KFLQQWRNLFQQYDRDRSGSISSTELQQALSQMGYN), 208 to 244 (LSPQFTQLLVSRYCARSAIPAMQLDCFIKVCTQLQVL), and 245 to 274 (TEAFREKDTAVQGNIRLSFEDFVTMTASRM). The Ca(2+) site is built by Asp-118, Asp-120, Ser-122, Tyr-124, and Glu-129. Residues Asp-185, Asp-187, Ser-189, Ser-191, and Glu-196 each coordinate Ca(2+). Positions 195–275 (TELQQALSQM…FVTMTASRML (81 aa)) are required for interaction with PDCD6.

In terms of assembly, heterodimer; heterodimerizes (via the EF-hand 5) with PDCD6. Dissociates from PDCD6 in presence of calcium. Post-translationally, ubiquitinated by the BCR(KLHL12) E3 ubiquitin ligase complex.

Its subcellular location is the cytoplasm. It is found in the endoplasmic reticulum. The protein localises to the membrane. It localises to the cytoplasmic vesicle. The protein resides in the COPII-coated vesicle membrane. Functionally, calcium-binding protein that acts as an adapter that bridges unrelated proteins or stabilizes weak protein-protein complexes in response to calcium. Together with PDCD6, acts as a calcium-dependent adapter for the BCR(KLHL12) complex, a complex involved in endoplasmic reticulum (ER)-Golgi transport by regulating the size of COPII coats. In response to cytosolic calcium increase, the heterodimer formed with PDCD6 interacts with, and bridges together the BCR(KLHL12) complex and SEC31 (SEC31A or SEC31B), promoting monoubiquitination of SEC31 and subsequent collagen export, which is required for neural crest specification. Its role in the heterodimer formed with PDCD6 is however unclear: some evidence shows that PEF1 and PDCD6 work together and promote association between PDCD6 and SEC31 in presence of calcium. Other reports show that PEF1 dissociates from PDCD6 in presence of calcium, and may act as a negative regulator of PDCD6. Also acts as a negative regulator of ER-Golgi transport; possibly by inhibiting interaction between PDCD6 and SEC31. This is Peflin from Mus musculus (Mouse).